We begin with the raw amino-acid sequence, 103 residues long: Non-histone chromosomal protein 6 (103 aa).

Disordered stretches follow at residues 1-30 (MPKA…KRGL) and 70-103 (KQRA…EESS). Positions 26-94 (PKRGLSAYMF…RYEDEKQAYN (69 aa)) form a DNA-binding region, HMG box. Positions 70 to 91 (KQRAPYEAKAAADKKRYEDEKQ) are enriched in basic and acidic residues.

It belongs to the NHP6 family. In terms of assembly, weakly associates with the stable heterodimer of ctc-1/pob3 and ctc-2/spt16 to form the FACT complex.

The protein localises to the nucleus. It is found in the chromosome. In terms of biological role, DNA-binding protein that induces severe bending of DNA. Required for DNA-binding by the FACT complex, a general chromatin factor that acts to reorganize nucleosomes. The FACT complex is involved in multiple processes that require DNA as a template such as mRNA elongation, DNA replication and DNA repair. Also augments the fidelity of transcription by RNA polymerase III independently of any role in the FACT complex. This Neurospora crassa (strain ATCC 24698 / 74-OR23-1A / CBS 708.71 / DSM 1257 / FGSC 987) protein is Non-histone chromosomal protein 6 (nhp-1).